A 99-amino-acid polypeptide reads, in one-letter code: MHEVVRQVMIRGRVQGVGFRYWTMREAIRFGVGGWVRNRRDGSVEALFAGSTEAVAEMITRCRSGPEFARVDDIEDQPVAANALKMIRPGERFSQLPTV.

In terms of domain architecture, Acylphosphatase-like spans 5 to 97 (VRQVMIRGRV…RPGERFSQLP (93 aa)). Catalysis depends on residues R20 and N38.

Belongs to the acylphosphatase family.

The catalysed reaction is an acyl phosphate + H2O = a carboxylate + phosphate + H(+). The sequence is that of Acylphosphatase (acyP) from Nitrobacter winogradskyi (strain ATCC 25391 / DSM 10237 / CIP 104748 / NCIMB 11846 / Nb-255).